The primary structure comprises 604 residues: MESDAKNYQIMDSWEEEPRDKSTNISSALNIIEFILSTDPQEDLSENDTINTRTQQLSATICQPEIKPTETSEKVSGSTDKNRQSGSSHECTTEAKDRNIDQETVQGGSGRRSSSDSRAETVVSGGISGSITDSKNGTQNTENIDLNEIRKMDKDSIERKMRQSADVPSEISGSDVIFTTEQSRNSDHGRSLEPISTPDTRSMSVVTAATPDDEEEILMKNSRMKKSSSTHQEDDKRIKKGGGGKGKDWFKKSRDTDNQTSTSDHKPTSKGQKKISKTTTTNTDTKGQTETQTESSETQSPSWNPIIDNNTDRTEQTSTTPPTTTPRSTRTKESIRTNSESKPKTQKTIGKERKDTEESNRFTERAITLLQNLGVIQSTSKLDLYQDKRVVCVANVLNNVDTASKIDFLAGLVIGVSMDNDTKLIQIQNEMLNLKADLKRMDESHRRLIENQREQLSLITSLISNLKIMTERGGKKDQNESNERVSMIKTKLKEEKIKKTRFDPLMEAQGIDKNIPDLYRHAGNTLENDVQVKSEILSSYNESNATRLIPRKVSSTMRSLVAVINNSNLPQSTKQSYINELKHCKSDEEVSELMDMFNEDVNNC.

2 disordered regions span residues 1–22 (MESDAKNYQIMDSWEEEPRDKS) and 39–360 (DPQE…EESN). The tract at residues 22 to 42 (STNISSALNIIEFILSTDPQE) is N0 binding. 2 stretches are compositionally biased toward polar residues: residues 47–61 (NDTINTRTQQLSATI) and 74–90 (KVSGSTDKNRQSGSSHE). Positions 91 to 101 (CTTEAKDRNID) are enriched in basic and acidic residues. Over residues 129 to 144 (GSITDSKNGTQNTENI) the composition is skewed to polar residues. Basic and acidic residues predominate over residues 147–163 (NEIRKMDKDSIERKMRQ). A compositionally biased stretch (polar residues) spans 197–207 (TPDTRSMSVVT). Positions 245–267 (KGKDWFKKSRDTDNQTSTSDHKP) are enriched in basic and acidic residues. Composition is skewed to low complexity over residues 277-300 (KTTTTNTDTKGQTETQTESSETQS) and 317-328 (TSTTPPTTTPRS). The span at 330 to 360 (RTKESIRTNSESKPKTQKTIGKERKDTEESN) shows a compositional bias: basic and acidic residues. The segment at 400–470 (VDTASKIDFL…SLISNLKIMT (71 aa)) is multimerization. A coiled-coil region spans residues 424–451 (LIQIQNEMLNLKADLKRMDESHRRLIEN). Residues 450-483 (ENQREQLSLITSLISNLKIMTERGGKKDQNESNE) are l protein binding. Residues 585 to 604 (KSDEEVSELMDMFNEDVNNC) are interaction with the nucleocapsid (N-RNA).

Belongs to the respirovirus P protein family. In terms of assembly, homotetramer. Interacts (via multimerization domain) with polymerase L; this interaction forms the polymerase L-P complex. Interacts (via N-terminus) with N0; this interaction allows P to chaperon N0 to avoid N polymerization before encapsidation. Interacts (via C-terminus) with N-RNA template; this interaction positions the polymerase on the template. Interacts with host PI4KB; this interaction allows P to recruit PI4KB to the viral factories to generate PI4P to facilitate viral replication.

Essential cofactor of the RNA polymerase L that plays a central role in the transcription and replication by forming the polymerase complex with RNA polymerase L and recruiting L to the genomic N-RNA template for RNA synthesis. Also plays a central role in the encapsidation of nascent RNA chains by forming the encapsidation complex with the nucleocapsid protein N (N-P complex). Acts as a chaperone for newly synthesized free N protein, so-called N0, allowing encapsidation of nascent RNA chains during replication. The nucleoprotein protein N prevents excessive phosphorylation of P, which leads to down-regulation of viral transcription/ replication. Participates, together with N, in the formation of viral factories (viroplasms), which are large inclusions in the host cytoplasm where replication takes place. Recruits host PI4KB and remodel the host endoplasmic reticulum membrane to form viral replication factories. The polypeptide is Phosphoprotein (P/V/D) (Human parainfluenza 3 virus (strain Wash/47885/57) (HPIV-3)).